Consider the following 486-residue polypeptide: 2-isopropylmalate synthase (486 aa).

The Pyruvate carboxyltransferase domain occupies 4–266; the sequence is VYIFDTTLRD…KTDVNLKEIA (263 aa). Asp13, His201, His203, and Asn237 together coordinate Mn(2+). Residues 390–486 are regulatory domain; it reads KVEIIHVTSG…LSTDIIEASA (97 aa).

Belongs to the alpha-IPM synthase/homocitrate synthase family. LeuA type 1 subfamily. Mn(2+) is required as a cofactor.

The protein localises to the cytoplasm. The catalysed reaction is 3-methyl-2-oxobutanoate + acetyl-CoA + H2O = (2S)-2-isopropylmalate + CoA + H(+). The protein operates within amino-acid biosynthesis; L-leucine biosynthesis; L-leucine from 3-methyl-2-oxobutanoate: step 1/4. Its function is as follows. Catalyzes the condensation of the acetyl group of acetyl-CoA with 3-methyl-2-oxobutanoate (2-ketoisovalerate) to form 3-carboxy-3-hydroxy-4-methylpentanoate (2-isopropylmalate). This Pyrococcus abyssi (strain GE5 / Orsay) protein is 2-isopropylmalate synthase.